The sequence spans 854 residues: Fibronectin-binding protein PlpA (854 aa).

Residues 1 to 24 (MDNNQNNFNQPGQQGFDQYQQQSG) are compositionally biased toward low complexity. Residues 1–33 (MDNNQNNFNQPGQQGFDQYQQQSGALVSYGYDA) form a disordered region. The segment at 91 to 109 (QYNQQQNQGYEQQYDEYGN) is fibronectin-binding. Disordered stretches follow at residues 247 to 327 (YEQE…LEAP), 411 to 434 (SSNN…EDSN), 743 to 766 (TINP…QLPP), and 835 to 854 (IQPS…YNNR). Basic and acidic residues predominate over residues 258 to 267 (EPAHEQDLRE). Composition is skewed to polar residues over residues 311–320 (TVNQPDQTPI) and 411–428 (SSNN…TSNE). A coiled-coil region spans residues 384–622 (NLEEIQKVKL…SSFQKALSEV (239 aa)). The segment covering 746-764 (PPQPQPQALPQPHPQPQQL) has biased composition (pro residues).

It localises to the cell membrane. Its function is as follows. Binds immobilized fibronectin, specifically the gelatin/heparin-binding domain. The sequence is that of Fibronectin-binding protein PlpA (plpA) from Mycoplasmoides gallisepticum (strain R(low / passage 15 / clone 2)) (Mycoplasma gallisepticum).